A 700-amino-acid polypeptide reads, in one-letter code: Calpain-2 catalytic subunit (700 aa).

Positions alanine 2–glycine 19 are cleaved as a propeptide — anchors to the small subunit. The Calpain catalytic domain occupies leucine 45–threonine 344. Glycine 91 and aspartate 96 together coordinate Ca(2+). Residue cysteine 105 is part of the active site. Residues glutamate 175, glutamine 229, and lysine 230 each coordinate Ca(2+). Catalysis depends on residues histidine 262 and asparagine 286. Ca(2+) is bound by residues glutamate 292, aspartate 299, and glutamate 323. The interval proline 345–aspartate 514 is domain III. The segment at glutamate 515–aspartate 529 is linker. Residues isoleucine 530–isoleucine 700 form a domain IV region. Residues alanine 542, aspartate 545, glutamate 547, glutamate 552, aspartate 585, aspartate 587, serine 589, lysine 591, glutamate 596, aspartate 615, aspartate 617, serine 619, threonine 621, glutamate 626, aspartate 658, and asparagine 661 each contribute to the Ca(2+) site. 2 EF-hand domains span residues phenylalanine 572 to glutamine 605 and threonine 602 to lysine 637. An EF-hand 3 domain is found at isoleucine 667 to isoleucine 700.

It belongs to the peptidase C2 family. As to quaternary structure, forms a heterodimer with a small (regulatory) subunit (CAPNS1). Ca(2+) serves as cofactor. As to expression, ubiquitous.

It localises to the cytoplasm. The protein resides in the cell membrane. It carries out the reaction Broad endopeptidase specificity.. With respect to regulation, activated by 200-1000 micromolar concentrations of calcium and inhibited by calpastatin. Functionally, calcium-regulated non-lysosomal thiol-protease which catalyze limited proteolysis of substrates involved in cytoskeletal remodeling and signal transduction. This is Calpain-2 catalytic subunit (CAPN2) from Gallus gallus (Chicken).